The primary structure comprises 255 residues: Ribonuclease PH (255 aa).

Phosphate contacts are provided by residues R86 and 124-126 (GTR).

The protein belongs to the RNase PH family. In terms of assembly, homohexameric ring arranged as a trimer of dimers.

The enzyme catalyses tRNA(n+1) + phosphate = tRNA(n) + a ribonucleoside 5'-diphosphate. Functionally, phosphorolytic 3'-5' exoribonuclease that plays an important role in tRNA 3'-end maturation. Removes nucleotide residues following the 3'-CCA terminus of tRNAs; can also add nucleotides to the ends of RNA molecules by using nucleoside diphosphates as substrates, but this may not be physiologically important. Probably plays a role in initiation of 16S rRNA degradation (leading to ribosome degradation) during starvation. The sequence is that of Ribonuclease PH from Geobacillus sp. (strain WCH70).